The following is a 112-amino-acid chain: UPF0342 protein SSA_1465 (112 aa).

It belongs to the UPF0342 family.

The protein is UPF0342 protein SSA_1465 of Streptococcus sanguinis (strain SK36).